The sequence spans 577 residues: Arginine--tRNA ligase (577 aa).

The 'HIGH' region signature appears at 122–132; sequence PNVAKEMHVGH.

It belongs to the class-I aminoacyl-tRNA synthetase family. As to quaternary structure, monomer.

It localises to the cytoplasm. It catalyses the reaction tRNA(Arg) + L-arginine + ATP = L-arginyl-tRNA(Arg) + AMP + diphosphate. This Salmonella paratyphi B (strain ATCC BAA-1250 / SPB7) protein is Arginine--tRNA ligase.